Reading from the N-terminus, the 153-residue chain is 3-hydroxyacyl-[acyl-carrier-protein] dehydratase FabZ (153 aa).

Residue His-56 is part of the active site.

The protein belongs to the thioester dehydratase family. FabZ subfamily.

The protein resides in the cytoplasm. The catalysed reaction is a (3R)-hydroxyacyl-[ACP] = a (2E)-enoyl-[ACP] + H2O. Functionally, involved in unsaturated fatty acids biosynthesis. Catalyzes the dehydration of short chain beta-hydroxyacyl-ACPs and long chain saturated and unsaturated beta-hydroxyacyl-ACPs. This is 3-hydroxyacyl-[acyl-carrier-protein] dehydratase FabZ from Halorhodospira halophila (strain DSM 244 / SL1) (Ectothiorhodospira halophila (strain DSM 244 / SL1)).